A 92-amino-acid polypeptide reads, in one-letter code: C-C motif chemokine 3 (92 aa).

The first 23 residues, 1–23, serve as a signal peptide directing secretion; that stretch reads MKVSTAALAVLLCTMALWNEVFS. Disulfide bonds link cysteine 34–cysteine 57 and cysteine 35–cysteine 73.

It belongs to the intercrine beta (chemokine CC) family. Self-associates. Also heterodimer of MIP-1-alpha(4-69) and MIP-1-beta(3-69). Interacts with CCR1.

Its subcellular location is the secreted. Monokine with inflammatory and chemokinetic properties. Binds to CCR1, CCR4 and CCR5. One of the major HIV-suppressive factors produced by CD8+ T-cells. Recombinant MIP-1-alpha induces a dose-dependent inhibition of different strains of HIV-1, HIV-2, and simian immunodeficiency virus (SIV). In Rattus norvegicus (Rat), this protein is C-C motif chemokine 3 (Ccl3).